Consider the following 427-residue polypeptide: Gamma-glutamyl phosphate reductase (427 aa).

It belongs to the gamma-glutamyl phosphate reductase family.

The protein localises to the cytoplasm. The enzyme catalyses L-glutamate 5-semialdehyde + phosphate + NADP(+) = L-glutamyl 5-phosphate + NADPH + H(+). The protein operates within amino-acid biosynthesis; L-proline biosynthesis; L-glutamate 5-semialdehyde from L-glutamate: step 2/2. Catalyzes the NADPH-dependent reduction of L-glutamate 5-phosphate into L-glutamate 5-semialdehyde and phosphate. The product spontaneously undergoes cyclization to form 1-pyrroline-5-carboxylate. This Brucella melitensis biotype 2 (strain ATCC 23457) protein is Gamma-glutamyl phosphate reductase.